Consider the following 37-residue polypeptide: MKVKASVKPICQKCKVVKRKGVVRVICQDPRHKQRQG.

It belongs to the bacterial ribosomal protein bL36 family.

This is Large ribosomal subunit protein bL36 from Endomicrobium trichonymphae.